A 393-amino-acid polypeptide reads, in one-letter code: 1-deoxy-D-xylulose 5-phosphate reductoisomerase (393 aa).

NADPH-binding residues include Thr-10, Gly-11, Ser-12, Ile-13, Arg-37, Gln-38, and Asn-124. Lys-125 lines the 1-deoxy-D-xylulose 5-phosphate pocket. Glu-126 is an NADPH binding site. Asp-150 contacts Mn(2+). 1-deoxy-D-xylulose 5-phosphate-binding residues include Ser-151, Glu-152, Ser-179, and His-202. Glu-152 contributes to the Mn(2+) binding site. Position 208 (Gly-208) interacts with NADPH. 4 residues coordinate 1-deoxy-D-xylulose 5-phosphate: Ser-215, Asn-220, Lys-221, and Glu-224. Residue Glu-224 coordinates Mn(2+).

The protein belongs to the DXR family. It depends on Mg(2+) as a cofactor. The cofactor is Mn(2+).

The enzyme catalyses 2-C-methyl-D-erythritol 4-phosphate + NADP(+) = 1-deoxy-D-xylulose 5-phosphate + NADPH + H(+). The protein operates within isoprenoid biosynthesis; isopentenyl diphosphate biosynthesis via DXP pathway; isopentenyl diphosphate from 1-deoxy-D-xylulose 5-phosphate: step 1/6. Catalyzes the NADPH-dependent rearrangement and reduction of 1-deoxy-D-xylulose-5-phosphate (DXP) to 2-C-methyl-D-erythritol 4-phosphate (MEP). The protein is 1-deoxy-D-xylulose 5-phosphate reductoisomerase of Cupriavidus necator (strain ATCC 17699 / DSM 428 / KCTC 22496 / NCIMB 10442 / H16 / Stanier 337) (Ralstonia eutropha).